A 641-amino-acid chain; its full sequence is Probable potassium transport system protein Kup (641 aa).

Over residues 1–14 (MALDSESSASNRQG) the composition is skewed to polar residues. The disordered stretch occupies residues 1–20 (MALDSESSASNRQGSRNEQD). The next 12 helical transmembrane spans lie at 29–49 (LCLTALGVVYGDIATSPLYAF), 69–89 (ILSLIFWALIILVSIKYLLII), 120–140 (VLIVLGLFGAALLYGDGMITP), 156–176 (PQLTSYIIPATTVILVLLFMV), 188–208 (FGPIMLVWFVVIALLGLNGII), 236–256 (VLGGVFLALTGAEALYADMGH), 267–287 (FALVLPALLLNYFGQGALLLL), 307–327 (LVGLATLATIIASQAIISGVF), 355–375 (VYVPAANWFMMIAAVWLVLHF), 384–404 (AFGIAVSGTMVITTILAFFVM), 410–430 (WNILTAVAVTVGFLIIDLAFF), and 437–457 (ITDGGWFPLAIAVFIFTLMIT).

This sequence belongs to the HAK/KUP transporter (TC 2.A.72) family.

The protein resides in the cell inner membrane. The enzyme catalyses K(+)(in) + H(+)(in) = K(+)(out) + H(+)(out). Functionally, transport of potassium into the cell. Likely operates as a K(+):H(+) symporter. This chain is Probable potassium transport system protein Kup, found in Nitrosomonas eutropha (strain DSM 101675 / C91 / Nm57).